Reading from the N-terminus, the 645-residue chain is Envelope glycoprotein (645 aa).

The first 33 residues, 1–33 (MESPAFSKPLKDKINPWGPLIIMGILVRAGASV), serve as a signal peptide directing secretion. The interval 32-237 (SVQRDSPHQV…QVLNVGPRVP (206 aa)) is receptor-binding domain (RBD). Residues 34–585 (QRDSPHQVFN…FNRSPWFTTL (552 aa)) are Extracellular-facing. Asparagine 43 and asparagine 58 each carry an N-linked (GlcNAc...) asparagine; by host glycan. Intrachain disulfides connect cysteine 113/cysteine 130 and cysteine 122/cysteine 135. Residues 259 to 286 (PRPPRPPPSGAASMVPGAPPPSQQPGTG) form a disordered region. N-linked (GlcNAc...) asparagine; by host glycosylation occurs at asparagine 301. 6 cysteine pairs are disulfide-bonded: cysteine 311–cysteine 314, cysteine 311–cysteine 538, cysteine 341–cysteine 395, cysteine 360–cysteine 372, cysteine 402–cysteine 415, and cysteine 530–cysteine 537. Residues 311–314 (CWLC) carry the CXXC motif. N-linked (GlcNAc...) asparagine; by host glycans are attached at residues asparagine 333 and asparagine 340. Residues asparagine 373 and asparagine 409 are each glycosylated (N-linked (GlcNAc...) asparagine; by host). The interval 447-467 (VSLTLALLLGGLTMGGIAAGV) is fusion peptide. The stretch at 490 to 510 (DLGALEKSVSALEKSLTSLSE) forms a coiled coil. The tract at residues 513-529 (LQNRRGLDLLFLKEGGL) is immunosuppression. Residues 530–538 (CAALKEECC) carry the CX6CC motif. The chain crosses the membrane as a helical span at residues 586-606 (ISTIMGPLIVLLLILLFGPCI). Cysteine 605 is lipidated: S-palmitoyl cysteine; by host. The Cytoplasmic portion of the chain corresponds to 607-640 (LNRLVQFVKDRISVVQALVLTQQYHQLKSIDPEE). Residues 630–633 (YHQL) carry the YXXL motif; contains endocytosis signal motif.

As to quaternary structure, the mature envelope protein (Env) consists of a trimer of SU-TM heterodimers attached by a labile interchain disulfide bond. The activated Env consists of SU monomers and TM trimers. Specific enzymatic cleavages in vivo yield mature proteins. Envelope glycoproteins are synthesized as an inactive precursor that is N-glycosylated and processed likely by host cell furin or by a furin-like protease in the Golgi to yield the mature SU and TM proteins. The cleavage site between SU and TM requires the minimal sequence [KR]-X-[KR]-R. The R-peptide is released from the C-terminus of the cytoplasmic tail of the TM protein upon particle formation as a result of proteolytic cleavage by the viral protease. Cleavage of this peptide is required for TM to become fusogenic. In terms of processing, the CXXC motif is highly conserved across a broad range of retroviral envelope proteins. It is thought to participate in the formation of a labile disulfide bond possibly with the CX6CC motif present in the transmembrane protein. Isomerization of the intersubunit disulfide bond to an SU intrachain disulfide bond is thought to occur upon receptor recognition in order to allow membrane fusion. Post-translationally, the transmembrane protein is palmitoylated. The R-peptide is palmitoylated.

The protein resides in the virion membrane. Its subcellular location is the host cell membrane. In terms of biological role, the surface protein (SU) attaches the virus to the host cell by binding to its receptor. This interaction activates a thiol in a CXXC motif of the C-terminal domain, where the other Cys residue participates in the formation of the intersubunit disulfide. The activated thiol will attack the disulfide and cause its isomerization into a disulfide isomer within the motif. This leads to SU displacement and TM refolding, and is thought to activate its fusogenic potential by unmasking its fusion peptide. Fusion occurs at the host cell plasma membrane. The transmembrane protein (TM) acts as a class I viral fusion protein. Under the current model, the protein has at least 3 conformational states: pre-fusion native state, pre-hairpin intermediate state, and post-fusion hairpin state. During viral and target cell membrane fusion, the coiled coil regions (heptad repeats) assume a trimer-of-hairpins structure, positioning the fusion peptide in close proximity to the C-terminal region of the ectodomain. The formation of this structure appears to drive apposition and subsequent fusion of viral and target cell membranes. Membranes fusion leads to delivery of the nucleocapsid into the cytoplasm. In Xenotropic MuLV-related virus (isolate VP42) (XMRV), this protein is Envelope glycoprotein (env).